The sequence spans 433 residues: MGIIDEAKRGQITDEMRAISKLEGIPVEKVRNRISEGKIMLIRNAKYPSRKLVPIGKRLTTKVNVNIGTSSEVVDLDMELQKVKVANKWGDTLMDLSTGGDLDAIRRDIIKASDLPVGTVPVYQIFIESFKKKSGGAYFTEDELLNTVEKHLKDGVAFMTIHAGITKDLAIRALKSDRIIPIVSRGGDMIAGWMIHNNSENPYRKNWDYVLEMFKEYDAVISLGDALRPGATGDAHDEFQIGELLETARLVKSALQKGVQVMVEGPGHVPLNEIAWDVKLMKKLTGGVPYYVLGPLPIDVGAPYDHIASAIGAAISSASGVDLLCYLTPAEHLGLPTVKQVEEGAIAYRIAAHAGDVVKLGRKARKWDDEVSYYRGKLDWENMISKLIDPQRAYQVYTQFGTPKVKACTMCGGYCPMMWAMDQVRKIGSSSSL.

Residues asparagine 66, methionine 94, tyrosine 123, histidine 162, 184–186 (SRG), 225–228 (DALR), and glutamate 264 each bind substrate. Histidine 268 is a Zn(2+) binding site. Tyrosine 291 is a substrate binding site. Residue histidine 332 participates in Zn(2+) binding. Residues cysteine 408, cysteine 411, and cysteine 415 each contribute to the [4Fe-4S] cluster site.

The protein belongs to the ThiC family. It depends on [4Fe-4S] cluster as a cofactor.

The enzyme catalyses 5-amino-1-(5-phospho-beta-D-ribosyl)imidazole + S-adenosyl-L-methionine = 4-amino-2-methyl-5-(phosphooxymethyl)pyrimidine + CO + 5'-deoxyadenosine + formate + L-methionine + 3 H(+). Its pathway is cofactor biosynthesis; thiamine diphosphate biosynthesis. Its function is as follows. Catalyzes the synthesis of the hydroxymethylpyrimidine phosphate (HMP-P) moiety of thiamine from aminoimidazole ribotide (AIR) in a radical S-adenosyl-L-methionine (SAM)-dependent reaction. This is Phosphomethylpyrimidine synthase from Saccharolobus islandicus (strain M.14.25 / Kamchatka #1) (Sulfolobus islandicus).